A 1029-amino-acid chain; its full sequence is Myosin phosphatase Rho-interacting protein (1029 aa).

The interaction with F-actin stretch occupies residues M1–T387. The region spanning K43–R150 is the PH 1 domain. The segment at N152–V267 is disordered. Residues S179–S195 show a composition bias toward low complexity. Residues S198, S224, S226, S230, and S232 each carry the phosphoserine modification. The span at S226–P237 shows a compositional bias: low complexity. Basic and acidic residues predominate over residues T245 to V267. Phosphoserine occurs at positions 271, 275, 294, and 297. Disordered regions lie at residues A279–S306 and P333–E383. T300 is subject to Phosphothreonine. Residues R338–A354 show a composition bias toward basic and acidic residues. Position 369 is a phosphoserine (S369). Positions L391–L487 constitute a PH 2 domain. The segment at S490–A614 is disordered. Residues P492 to D509 are compositionally biased toward polar residues. The residue at position 497 (S497) is a Phosphoserine. Positions P527–E550 are enriched in basic and acidic residues. The segment at E550–S828 is interaction with RHOA. Residues R562–S571 are compositionally biased toward polar residues. The segment covering E583–R592 has biased composition (basic and acidic residues). A Phosphoserine modification is found at S622. Position 650 is a phosphothreonine (T650). Residues S675–E979 adopt a coiled-coil conformation. At S804 the chain carries Phosphoserine. An interaction with PPP1R12A region spans residues S828–L883. Residues S981, S997, S1018, and S1020 each carry the phosphoserine modification.

In terms of assembly, binds RHOA, PPP1R12A/MBS and PPP1R12C/MBS85 through adjacent coiled coil domains. Interacts with MYZAP. Binds F-actin through its N-terminus.

The protein localises to the cytoplasm. It localises to the cytoskeleton. Its function is as follows. Targets myosin phosphatase to the actin cytoskeleton. Required for the regulation of the actin cytoskeleton by RhoA and ROCK1. Depletion leads to an increased number of stress fibers in smooth muscle cells through stabilization of actin fibers by phosphorylated myosin. Overexpression of MRIP as well as its F-actin-binding region leads to disassembly of stress fibers in neuronal cells. The chain is Myosin phosphatase Rho-interacting protein (Mprip) from Rattus norvegicus (Rat).